The primary structure comprises 195 residues: UPF0301 protein Bpro_1142 (195 aa).

This sequence belongs to the UPF0301 (AlgH) family.

The chain is UPF0301 protein Bpro_1142 from Polaromonas sp. (strain JS666 / ATCC BAA-500).